The following is a 196-amino-acid chain: tRNA(Phe) 7-((3-amino-3-carboxypropyl)-4-demethylwyosine(37)-N(4))-methyltransferase (196 aa).

It belongs to the TYW3 family.

The catalysed reaction is 4-demethyl-7-[(3S)-3-amino-3-carboxypropyl]wyosine(37) in tRNA(Phe) + S-adenosyl-L-methionine = 7-[(3S)-3-amino-3-carboxypropyl]wyosine(37) in tRNA(Phe) + S-adenosyl-L-homocysteine + H(+). S-adenosyl-L-methionine-dependent methyltransferase that acts as a component of the wyosine derivatives biosynthesis pathway. Probably methylates N-4 position of wybutosine-86 to produce wybutosine-72. The sequence is that of tRNA(Phe) 7-((3-amino-3-carboxypropyl)-4-demethylwyosine(37)-N(4))-methyltransferase from Archaeoglobus fulgidus (strain ATCC 49558 / DSM 4304 / JCM 9628 / NBRC 100126 / VC-16).